The sequence spans 155 residues: Interleukin-2 (155 aa).

The first 20 residues, 1–20, serve as a signal peptide directing secretion; that stretch reads MYKMQLLSCIALMLVLVANS. Residue T24 is glycosylated (O-linked (GalNAc...) threonine). A disulfide bridge connects residues C79 and C127. Residue N112 is glycosylated (N-linked (GlcNAc...) asparagine).

It belongs to the IL-2 family.

It is found in the secreted. In terms of biological role, cytokine produced by activated CD4-positive helper T-cells and to a lesser extend activated CD8-positive T-cells and natural killer (NK) cells that plays pivotal roles in the immune response and tolerance. Binds to a receptor complex composed of either the high-affinity trimeric IL-2R (IL2RA/CD25, IL2RB/CD122 and IL2RG/CD132) or the low-affinity dimeric IL-2R (IL2RB and IL2RG). Interaction with the receptor leads to oligomerization and conformation changes in the IL-2R subunits resulting in downstream signaling starting with phosphorylation of JAK1 and JAK3. In turn, JAK1 and JAK3 phosphorylate the receptor to form a docking site leading to the phosphorylation of several substrates including STAT5. This process leads to activation of several pathways including STAT, phosphoinositide-3-kinase/PI3K and mitogen-activated protein kinase/MAPK pathways. Functions as a T-cell growth factor and can increase NK-cell cytolytic activity as well. Promotes strong proliferation of activated B-cells and subsequently immunoglobulin production. Plays a pivotal role in regulating the adaptive immune system by controlling the survival and proliferation of regulatory T-cells, which are required for the maintenance of immune tolerance. Moreover, participates in the differentiation and homeostasis of effector T-cell subsets, including Th1, Th2, Th17 as well as memory CD8-positive T-cells. This Vulpes vulpes (Red fox) protein is Interleukin-2 (IL2).